The sequence spans 141 residues: HTH-type transcriptional regulator LrpA (141 aa).

The 62-residue stretch at valine 2–serine 63 folds into the HTH asnC-type domain. A DNA-binding region (H-T-H motif) is located at residues phenylalanine 21–lysine 40.

Homooctamer; tetramer of dimers.

In terms of biological role, DNA-binding protein that negatively regulates its own transcription. Interferes with RNA polymerase (RNAP) recruitment by inhibiting the association of RNAP with the TBP-TFB promoter complex. The polypeptide is HTH-type transcriptional regulator LrpA (lrpA) (Pyrococcus abyssi (strain GE5 / Orsay)).